The chain runs to 173 residues: Photosystem I assembly protein Ycf3 (173 aa).

TPR repeat units follow at residues 35–68, 72–105, and 120–153; these read AFVY…EEDP, SYIL…NPRM, and GEKA…APNN.

The protein belongs to the Ycf3 family.

Its subcellular location is the cellular thylakoid membrane. In terms of biological role, essential for the assembly of the photosystem I (PSI) complex. May act as a chaperone-like factor to guide the assembly of the PSI subunits. This is Photosystem I assembly protein Ycf3 from Rippkaea orientalis (strain PCC 8801 / RF-1) (Cyanothece sp. (strain PCC 8801)).